The primary structure comprises 506 residues: Galactose/methyl galactoside import ATP-binding protein MglA (506 aa).

ABC transporter domains follow at residues Leu14 to Glu249 and Val264 to Leu506. Gly46–Ser53 is an ATP binding site.

The protein belongs to the ABC transporter superfamily. Galactose/methyl galactoside importer (TC 3.A.1.2.3) family. The complex is composed of one ATP-binding protein (MglA), two transmembrane proteins (MglC) and a solute-binding protein (MglB).

Its subcellular location is the cell inner membrane. It carries out the reaction D-galactose(out) + ATP + H2O = D-galactose(in) + ADP + phosphate + H(+). It catalyses the reaction methyl beta-D-galactoside(out) + ATP + H2O = methyl beta-D-galactoside(in) + ADP + phosphate + H(+). In terms of biological role, part of the ABC transporter complex MglABC involved in galactose/methyl galactoside import. Responsible for energy coupling to the transport system. This is Galactose/methyl galactoside import ATP-binding protein MglA from Mannheimia succiniciproducens (strain KCTC 0769BP / MBEL55E).